The sequence spans 695 residues: Elongation factor G (695 aa).

One can recognise a tr-type G domain in the interval 12-286 (DKLRNIGIMA…AVIDYLPSPL (275 aa)). Residues 21–28 (AHIDAGKT), 85–89 (DTPGH), and 139–142 (NKMD) each bind GTP.

The protein belongs to the TRAFAC class translation factor GTPase superfamily. Classic translation factor GTPase family. EF-G/EF-2 subfamily.

The protein localises to the cytoplasm. Its function is as follows. Catalyzes the GTP-dependent ribosomal translocation step during translation elongation. During this step, the ribosome changes from the pre-translocational (PRE) to the post-translocational (POST) state as the newly formed A-site-bound peptidyl-tRNA and P-site-bound deacylated tRNA move to the P and E sites, respectively. Catalyzes the coordinated movement of the two tRNA molecules, the mRNA and conformational changes in the ribosome. The polypeptide is Elongation factor G (Thermotoga sp. (strain RQ2)).